The sequence spans 317 residues: 17-beta-hydroxysteroid dehydrogenase type 6 (317 aa).

An N-terminal signal peptide occupies residues 1–17 (MWLYLAAFVGLYYLLHW). 33–57 (FITGCDSGFGNLLARQLDARGLRVL) is an NAD(+) binding site. The N-linked (GlcNAc...) asparagine glycan is linked to Asn161. Substrate is bound at residue Ser164. Tyr176 serves as the catalytic Proton acceptor. N-linked (GlcNAc...) asparagine glycans are attached at residues Asn215 and Asn256.

It belongs to the short-chain dehydrogenases/reductases (SDR) family. In terms of tissue distribution, detected in liver and prostate (at protein level). Detected in adult liver, lung, brain, placenta, prostate, adrenal gland, testis, mammary gland, spleen, spinal cord and uterus. Detected in caudate nucleus, and at lower levels in amygdala, corpus callosum, hippocampus, substantia nigra and thalamus. Detected in fetal lung, liver and brain.

Its subcellular location is the microsome membrane. The protein resides in the early endosome membrane. The enzyme catalyses all-trans-retinol--[retinol-binding protein] + NAD(+) = all-trans-retinal--[retinol-binding protein] + NADH + H(+). It carries out the reaction all-trans-retinol + NAD(+) = all-trans-retinal + NADH + H(+). The catalysed reaction is androsterone + NAD(+) = 5alpha-androstan-3,17-dione + NADH + H(+). It catalyses the reaction testosterone + NAD(+) = androst-4-ene-3,17-dione + NADH + H(+). The enzyme catalyses 5alpha-androstane-3alpha,17beta-diol + NAD(+) = 17beta-hydroxy-5alpha-androstan-3-one + NADH + H(+). It carries out the reaction 17beta-estradiol + NAD(+) = estrone + NADH + H(+). The catalysed reaction is 17beta-estradiol + NADP(+) = estrone + NADPH + H(+). It catalyses the reaction 3alpha-hydroxy-5alpha-pregnan-20-one + NAD(+) = 5alpha-pregnane-3,20-dione + NADH + H(+). The enzyme catalyses 5alpha-androstane-3beta,17beta-diol + NAD(+) = 17beta-hydroxy-5alpha-androstan-3-one + NADH + H(+). It carries out the reaction 3beta-hydroxy-5alpha-androstan-17-one + NAD(+) = 5alpha-androstan-3,17-dione + NADH + H(+). Functionally, NAD-dependent oxidoreductase with broad substrate specificity that shows both oxidative and reductive activity (in vitro). Has 17-beta-hydroxysteroid dehydrogenase activity towards various steroids (in vitro). Converts 5-alpha-androstan-3-alpha,17-beta-diol to androsterone and estradiol to estrone (in vitro). Has 3-alpha-hydroxysteroid dehydrogenase activity towards androsterone (in vitro). Has retinol dehydrogenase activity towards all-trans-retinol (in vitro). Can convert androsterone to epi-androsterone. Androsterone is first oxidized to 5-alpha-androstane-3,17-dione and then reduced to epi-andosterone. Can act on both C-19 and C-21 3-alpha-hydroxysteroids. This is 17-beta-hydroxysteroid dehydrogenase type 6 (HSD17B6) from Homo sapiens (Human).